The chain runs to 992 residues: Disks large-associated protein 4 (992 aa).

A compositionally biased stretch (basic and acidic residues) spans 1–20; it reads MKGLGDSRPRHLSDSLDPPH. Disordered regions lie at residues 1–30, 47–66, and 157–206; these read MKGLGDSRPRHLSDSLDPPHEPLFAGTDRN, PGQNTLPGDGLFPLNNQLPP, and LEGT…GWWS. Residues 162 to 171 show a composition bias toward gly residues; it reads GKVGGNGSKK. Residues 172 to 194 show a composition bias toward basic and acidic residues; the sequence is GGMEDGKGRRAKSKERAKAGEPK. Phosphoserine is present on residues serine 206 and serine 207. Arginine 291 carries the post-translational modification Omega-N-methylarginine. A disordered region spans residues 342-396; sequence STTLLSPRETDAAAEGPIPCRRMRSGSYIKAMGDEDSDESGGSPKPSPKTAARRQ. Residues serine 378, serine 381, serine 388, serine 405, serine 415, and serine 421 each carry the phosphoserine modification. Disordered stretches follow at residues 527 to 751, 763 to 798, and 915 to 992; these read SVSL…GPRQ, SYGDNSDPALEASSLPPPDPWLETSSSSPAEPAQPG, and TPEK…QTRL. The span at 528–554 shows a compositional bias: low complexity; it reads VSLQSLSPPPSTGSLSNSRTLPSSSCL. Residues 576–591 show a composition bias toward polar residues; the sequence is VTVQSSTESAQDTYLD. Phosphoserine occurs at positions 580, 581, 609, 611, 665, and 744. Residues 600–620 are compositionally biased toward low complexity; sequence TSQSGLSNSSDSLDSSTRPPS. The residue at position 915 (threonine 915) is a Phosphothreonine. 2 stretches are compositionally biased toward basic and acidic residues: residues 915–925 and 940–958; these read TPEKRKEEKKP and VSRDKASDASDKQRQEARK. Residues 969-978 show a composition bias toward polar residues; that stretch reads VRQNSATESA. The residue at position 973 (serine 973) is a Phosphoserine.

Belongs to the SAPAP family. Interacts with DLG1 and DLG4/PSD-95.

The protein resides in the membrane. May play a role in the molecular organization of synapses and neuronal cell signaling. Could be an adapter protein linking ion channel to the subsynaptic cytoskeleton. May induce enrichment of PSD-95/SAP90 at the plasma membrane. This is Disks large-associated protein 4 (DLGAP4) from Homo sapiens (Human).